We begin with the raw amino-acid sequence, 422 residues long: UPF0761 membrane protein XAC0937 (422 aa).

The next 6 helical transmembrane spans lie at 45–65 (VFALVPLAIVVFGVLSAFPAF), 102–122 (FTVAGMVALVASLLITLHSIE), 151–171 (GTMLAAASMAMAAYVFALPLF), 179–199 (LAEFAWRLAPMAVEFVCIVLI), 213–233 (ALPGALLAVILMEIVKWGFGF), and 247–267 (ALSALPILLLWIYLSWVSVLL).

The protein belongs to the UPF0761 family.

Its subcellular location is the cell inner membrane. This is UPF0761 membrane protein XAC0937 from Xanthomonas axonopodis pv. citri (strain 306).